The primary structure comprises 225 residues: UPF0758 protein BCQ_4241 (225 aa).

The region spanning 103–225 is the MPN domain; sequence SIRSPEDCAR…FVSLKEKGHI (123 aa). Residues His174, His176, and Asp187 each coordinate Zn(2+). A JAMM motif motif is present at residues 174-187; sequence HNHPSGDPAPSRED.

Belongs to the UPF0758 family.

The sequence is that of UPF0758 protein BCQ_4241 from Bacillus cereus (strain Q1).